We begin with the raw amino-acid sequence, 428 residues long: MSIMKKRSSRAADPDELLCCCEYIDRHGSRSHMVACCCDCEDLDEACDRWMNKEPQNPDSVSRALATINDRLRVPWISGARQIDVSLIPPLILLPVFLHIAALHYLLGIIMLTAMPITVLWYYFFTHRKKGRTLFFLGLALFSLFYMFYLFLTQVVPRGEVTELQLAVVTAGVALTVIFLMLTKRGPGLVRPRPSETHSTVTYHSTPPDVDGVYLNGARHQVVIGSRVASSEHTGEPGTEEEEEGVQKRNWCAVCKVVRPQRAGHCRICGVCVLRLDHHCVWINSCVGLANHRTFLLTLLFFLLTSIYGISLVLASVCPDQRVLTALFYCPDVYSQYSSALCFTCAWYSSIVTGGLLHLLLLQILNISLNVTEREARLALREKSAQRRLWGLIVHTGHYSRGFWSNWTEFLTMTEDTQPAGHKTEDLV.

Topologically, residues 1–82 (MSIMKKRSSR…RVPWISGARQ (82 aa)) are cytoplasmic. Residues 83 to 99 (IDVSLIPPLILLPVFLH) traverse the membrane as a helical segment. Topologically, residues 100–105 (IAALHY) are lumenal. The chain crosses the membrane as a helical span at residues 106–125 (LLGIIMLTAMPITVLWYYFF). At 126 to 132 (THRKKGR) the chain is on the cytoplasmic side. A helical membrane pass occupies residues 133–153 (TLFFLGLALFSLFYMFYLFLT). The Lumenal portion of the chain corresponds to 154–160 (QVVPRGE). A helical membrane pass occupies residues 161–181 (VTELQLAVVTAGVALTVIFLM). At 182-294 (LTKRGPGLVR…SCVGLANHRT (113 aa)) the chain is on the cytoplasmic side. The region spanning 250 to 300 (NWCAVCKVVRPQRAGHCRICGVCVLRLDHHCVWINSCVGLANHRTFLLTLL) is the DHHC domain. Cys280 acts as the S-palmitoyl cysteine intermediate in catalysis. The chain crosses the membrane as a helical span at residues 295–315 (FLLTLLFFLLTSIYGISLVLA). Residues 316–350 (SVCPDQRVLTALFYCPDVYSQYSSALCFTCAWYSS) are Lumenal-facing. A helical transmembrane segment spans residues 351–371 (IVTGGLLHLLLLQILNISLNV). Over 372-428 (TEREARLALREKSAQRRLWGLIVHTGHYSRGFWSNWTEFLTMTEDTQPAGHKTEDLV) the chain is Cytoplasmic.

This sequence belongs to the DHHC palmitoyltransferase family.

The protein resides in the golgi apparatus membrane. Its subcellular location is the golgi apparatus. The protein localises to the trans-Golgi network membrane. The enzyme catalyses L-cysteinyl-[protein] + hexadecanoyl-CoA = S-hexadecanoyl-L-cysteinyl-[protein] + CoA. In terms of biological role, palmitoyltransferase that could catalyze the addition of palmitate onto various protein substrates and be involved in a variety of cellular processes. This Danio rerio (Zebrafish) protein is Palmitoyltransferase ZDHHC23-B.